We begin with the raw amino-acid sequence, 334 residues long: 4-hydroxy-3-methylbut-2-enyl diphosphate reductase (334 aa).

Cys19 is a binding site for [4Fe-4S] cluster. 2 residues coordinate (2E)-4-hydroxy-3-methylbut-2-enyl diphosphate: His48 and His84. His48 and His84 together coordinate dimethylallyl diphosphate. Isopentenyl diphosphate is bound by residues His48 and His84. [4Fe-4S] cluster is bound at residue Cys106. A (2E)-4-hydroxy-3-methylbut-2-enyl diphosphate-binding site is contributed by His134. Residue His134 coordinates dimethylallyl diphosphate. His134 is a binding site for isopentenyl diphosphate. The active-site Proton donor is Glu136. (2E)-4-hydroxy-3-methylbut-2-enyl diphosphate is bound at residue Thr175. [4Fe-4S] cluster is bound at residue Cys205. 4 residues coordinate (2E)-4-hydroxy-3-methylbut-2-enyl diphosphate: Ser233, Ser234, Asn235, and Ser278. Positions 233, 234, 235, and 278 each coordinate dimethylallyl diphosphate. Residues Ser233, Ser234, Asn235, and Ser278 each coordinate isopentenyl diphosphate.

The protein belongs to the IspH family. Requires [4Fe-4S] cluster as cofactor.

The catalysed reaction is isopentenyl diphosphate + 2 oxidized [2Fe-2S]-[ferredoxin] + H2O = (2E)-4-hydroxy-3-methylbut-2-enyl diphosphate + 2 reduced [2Fe-2S]-[ferredoxin] + 2 H(+). It carries out the reaction dimethylallyl diphosphate + 2 oxidized [2Fe-2S]-[ferredoxin] + H2O = (2E)-4-hydroxy-3-methylbut-2-enyl diphosphate + 2 reduced [2Fe-2S]-[ferredoxin] + 2 H(+). Its pathway is isoprenoid biosynthesis; dimethylallyl diphosphate biosynthesis; dimethylallyl diphosphate from (2E)-4-hydroxy-3-methylbutenyl diphosphate: step 1/1. It participates in isoprenoid biosynthesis; isopentenyl diphosphate biosynthesis via DXP pathway; isopentenyl diphosphate from 1-deoxy-D-xylulose 5-phosphate: step 6/6. In terms of biological role, catalyzes the conversion of 1-hydroxy-2-methyl-2-(E)-butenyl 4-diphosphate (HMBPP) into a mixture of isopentenyl diphosphate (IPP) and dimethylallyl diphosphate (DMAPP). Acts in the terminal step of the DOXP/MEP pathway for isoprenoid precursor biosynthesis. This chain is 4-hydroxy-3-methylbut-2-enyl diphosphate reductase, found in Chelativorans sp. (strain BNC1).